We begin with the raw amino-acid sequence, 242 residues long: Phosphoribosylaminoimidazole-succinocarboxamide synthase (242 aa).

The protein belongs to the SAICAR synthetase family.

The enzyme catalyses 5-amino-1-(5-phospho-D-ribosyl)imidazole-4-carboxylate + L-aspartate + ATP = (2S)-2-[5-amino-1-(5-phospho-beta-D-ribosyl)imidazole-4-carboxamido]succinate + ADP + phosphate + 2 H(+). It participates in purine metabolism; IMP biosynthesis via de novo pathway; 5-amino-1-(5-phospho-D-ribosyl)imidazole-4-carboxamide from 5-amino-1-(5-phospho-D-ribosyl)imidazole-4-carboxylate: step 1/2. In Prochlorococcus marinus subsp. pastoris (strain CCMP1986 / NIES-2087 / MED4), this protein is Phosphoribosylaminoimidazole-succinocarboxamide synthase.